The following is a 230-amino-acid chain: Small ribosomal subunit protein uS3 (230 aa).

Residues 39 to 107 (VRKFLVEKLQ…PAQINIAEIR (69 aa)) enclose the KH type-2 domain.

This sequence belongs to the universal ribosomal protein uS3 family. As to quaternary structure, part of the 30S ribosomal subunit. Forms a tight complex with proteins S10 and S14.

Functionally, binds the lower part of the 30S subunit head. Binds mRNA in the 70S ribosome, positioning it for translation. This chain is Small ribosomal subunit protein uS3, found in Shewanella baltica (strain OS223).